The sequence spans 431 residues: Enolase (431 aa).

A (2R)-2-phosphoglycerate-binding site is contributed by glutamine 167. The Proton donor role is filled by glutamate 209. 3 residues coordinate Mg(2+): aspartate 246, glutamate 289, and aspartate 316. Positions 341, 370, 371, and 392 each coordinate (2R)-2-phosphoglycerate. The active-site Proton acceptor is the lysine 341.

It belongs to the enolase family. In terms of assembly, component of the RNA degradosome, a multiprotein complex involved in RNA processing and mRNA degradation. Mg(2+) is required as a cofactor.

The protein localises to the cytoplasm. The protein resides in the secreted. It is found in the cell surface. It carries out the reaction (2R)-2-phosphoglycerate = phosphoenolpyruvate + H2O. The protein operates within carbohydrate degradation; glycolysis; pyruvate from D-glyceraldehyde 3-phosphate: step 4/5. Catalyzes the reversible conversion of 2-phosphoglycerate (2-PG) into phosphoenolpyruvate (PEP). It is essential for the degradation of carbohydrates via glycolysis. The polypeptide is Enolase (Chromohalobacter salexigens (strain ATCC BAA-138 / DSM 3043 / CIP 106854 / NCIMB 13768 / 1H11)).